The sequence spans 196 residues: Crossover junction endodeoxyribonuclease RuvC (196 aa).

Catalysis depends on residues D23, E83, and H156. 3 residues coordinate Mg(2+): D23, E83, and H156.

It belongs to the RuvC family. As to quaternary structure, homodimer which binds Holliday junction (HJ) DNA. The HJ becomes 2-fold symmetrical on binding to RuvC with unstacked arms; it has a different conformation from HJ DNA in complex with RuvA. In the full resolvosome a probable DNA-RuvA(4)-RuvB(12)-RuvC(2) complex forms which resolves the HJ. Mg(2+) is required as a cofactor.

It localises to the cytoplasm. It catalyses the reaction Endonucleolytic cleavage at a junction such as a reciprocal single-stranded crossover between two homologous DNA duplexes (Holliday junction).. Its function is as follows. The RuvA-RuvB-RuvC complex processes Holliday junction (HJ) DNA during genetic recombination and DNA repair. Endonuclease that resolves HJ intermediates. Cleaves cruciform DNA by making single-stranded nicks across the HJ at symmetrical positions within the homologous arms, yielding a 5'-phosphate and a 3'-hydroxyl group; requires a central core of homology in the junction. The consensus cleavage sequence is 5'-(A/T)TT(C/G)-3'. Cleavage occurs on the 3'-side of the TT dinucleotide at the point of strand exchange. HJ branch migration catalyzed by RuvA-RuvB allows RuvC to scan DNA until it finds its consensus sequence, where it cleaves and resolves the cruciform DNA. This chain is Crossover junction endodeoxyribonuclease RuvC, found in Treponema pallidum (strain Nichols).